The following is a 481-amino-acid chain: Trigger factor (481 aa).

In terms of domain architecture, PPIase FKBP-type spans 174–261 (GDIAVVGFKG…LKDLKTRELP (88 aa)). The disordered stretch occupies residues 430–481 (ENSTVTEKAPEAESDAAKASKPAAAKKDASKAKTAKTSKAKTAKAESESAES). The span at 437–447 (KAPEAESDAAK) shows a compositional bias: basic and acidic residues. The span at 462 to 471 (KTAKTSKAKT) shows a compositional bias: basic residues. Over residues 472–481 (AKAESESAES) the composition is skewed to basic and acidic residues.

Belongs to the FKBP-type PPIase family. Tig subfamily.

The protein resides in the cytoplasm. It carries out the reaction [protein]-peptidylproline (omega=180) = [protein]-peptidylproline (omega=0). Its function is as follows. Involved in protein export. Acts as a chaperone by maintaining the newly synthesized protein in an open conformation. Functions as a peptidyl-prolyl cis-trans isomerase. The polypeptide is Trigger factor (Synechococcus sp. (strain WH7803)).